Consider the following 368-residue polypeptide: 3-dehydroquinate synthase (368 aa).

This sequence belongs to the archaeal-type DHQ synthase family.

It catalyses the reaction 2-amino-2,3,7-trideoxy-D-lyxo-hept-6-ulosonate + NAD(+) + H2O = 3-dehydroquinate + NH4(+) + NADH + H(+). In terms of biological role, catalyzes the oxidative deamination and cyclization of 2-amino-3,7-dideoxy-D-threo-hept-6-ulosonic acid (ADH) to yield 3-dehydroquinate (DHQ), which is fed into the canonical shikimic pathway of aromatic amino acid biosynthesis. This chain is 3-dehydroquinate synthase, found in Methanobrevibacter smithii (strain ATCC 35061 / DSM 861 / OCM 144 / PS).